Consider the following 148-residue polypeptide: 2S seed storage protein 1 (148 aa).

Positions 1 to 19 (MARFTIVLAVLFAAALVSA) are cleaved as a signal peptide. Positions 20 to 38 (SAHKTVVTTSVAEEGEEEN) are excised as a propeptide. The interval 24 to 94 (TVVTTSVAEE…ECCNELRDVK (71 aa)) is involved in IgE-binding. 4 cysteine pairs are disulfide-bonded: Cys42/Cys97, Cys54/Cys86, Cys87/Cys133, and Cys99/Cys141. Immunodominant epitope; binds to IgE of 14 patients out of 15 tested regions lie at residues 46-55 (SRQCQMRHCM), 48-57 (QCQMRHCMQW), and 76-86 (NQGQFEHFREC). Positions 69–76 (FLRSAEAN) are excised as a propeptide. A propeptide spanning residues 147-148 (FA) is cleaved from the precursor.

It belongs to the 2S seed storage albumins family. The mature protein consists of a small and a large chain linked by disulfide bonds. Expressed in seeds (at protein level).

Seed storage protein. The sequence is that of 2S seed storage protein 1 from Sesamum indicum (Oriental sesame).